The primary structure comprises 120 residues: Phosphoribosyl-AMP cyclohydrolase (120 aa).

D75 provides a ligand contact to Mg(2+). C76 contacts Zn(2+). 2 residues coordinate Mg(2+): D77 and D79. Residues C92 and C99 each coordinate Zn(2+).

Belongs to the PRA-CH family. In terms of assembly, homodimer. Mg(2+) is required as a cofactor. It depends on Zn(2+) as a cofactor.

It localises to the cytoplasm. It catalyses the reaction 1-(5-phospho-beta-D-ribosyl)-5'-AMP + H2O = 1-(5-phospho-beta-D-ribosyl)-5-[(5-phospho-beta-D-ribosylamino)methylideneamino]imidazole-4-carboxamide. It participates in amino-acid biosynthesis; L-histidine biosynthesis; L-histidine from 5-phospho-alpha-D-ribose 1-diphosphate: step 3/9. Functionally, catalyzes the hydrolysis of the adenine ring of phosphoribosyl-AMP. This Haloarcula marismortui (strain ATCC 43049 / DSM 3752 / JCM 8966 / VKM B-1809) (Halobacterium marismortui) protein is Phosphoribosyl-AMP cyclohydrolase.